The following is a 600-amino-acid chain: Spastin (600 aa).

The interval 1 to 39 is disordered; that stretch reads MNSPGGRNDKKKPVTPAAETGPGSPTTPPSTETQVVLAP. Topologically, residues 1–53 are cytoplasmic; the sequence is MNSPGGRNDKKKPVTPAAETGPGSPTTPPSTETQVVLAPPSPHKRNLHLFSYP. The span at 15-33 shows a compositional bias: low complexity; the sequence is TPAAETGPGSPTTPPSTET. An intramembrane region (helical) is located at residues 54 to 74; sequence LLAVFSLLRFLAFQLGLLFVW. Residues 75–600 are Cytoplasmic-facing; it reads CCELLSRSVM…WNQDFGDTTV (526 aa). The region spanning 110 to 185 is the MIT domain; that stretch reads YHQQAFQYIS…IMAKDRLQLL (76 aa). Residues 213-294 are disordered; sequence GLLKPEKGAV…KPATPTTAVR (82 aa). Basic and acidic residues predominate over residues 216–228; it reads KPEKGAVPKKKDP. The segment covering 253–291 has biased composition (polar residues); sequence PNCTSVPTSARQAGAHTPSNRGATGKNNTRTNKPATPTT. 366-373 serves as a coordination point for ATP; that stretch reads GPPGNGKT.

The protein belongs to the AAA ATPase family. Spastin subfamily. Homohexamer. The homohexamer is stabilized by ATP-binding. The homohexamer may adopt a ring conformation through which microtubules pass prior to being severed. Interacts with microtubules.

The protein resides in the membrane. Its subcellular location is the cytoplasm. It localises to the cytoskeleton. The protein localises to the microtubule organizing center. It is found in the centrosome. The protein resides in the perinuclear region. Its subcellular location is the nucleus. It carries out the reaction n ATP + n H2O + a microtubule = n ADP + n phosphate + (n+1) alpha/beta tubulin heterodimers.. Its function is as follows. ATP-dependent microtubule severing protein that specifically recognizes and cuts microtubules that are polyglutamylated. Preferentially recognizes and acts on microtubules decorated with short polyglutamate tails: severing activity increases as the number of glutamates per tubulin rises from one to eight, but decreases beyond this glutamylation threshold. Microtubule severing promotes reorganization of cellular microtubule arrays and the release of microtubules from the centrosome following nucleation. Required for membrane traffic from the endoplasmic reticulum (ER) to the Golgi and for completion of the abscission stage of cytokinesis. Also plays a role in axon growth and the formation of axonal branches. The sequence is that of Spastin from Xenopus laevis (African clawed frog).